Here is an 842-residue protein sequence, read N- to C-terminus: DNA mismatch repair protein MutS (842 aa).

596-603 (GPNMSGKS) contacts ATP.

The protein belongs to the DNA mismatch repair MutS family.

This protein is involved in the repair of mismatches in DNA. It is possible that it carries out the mismatch recognition step. This protein has a weak ATPase activity. The polypeptide is DNA mismatch repair protein MutS (Exiguobacterium sp. (strain ATCC BAA-1283 / AT1b)).